A 695-amino-acid polypeptide reads, in one-letter code: Glycine--tRNA ligase beta subunit (695 aa).

This sequence belongs to the class-II aminoacyl-tRNA synthetase family. In terms of assembly, tetramer of two alpha and two beta subunits.

Its subcellular location is the cytoplasm. The catalysed reaction is tRNA(Gly) + glycine + ATP = glycyl-tRNA(Gly) + AMP + diphosphate. This is Glycine--tRNA ligase beta subunit from Lawsonia intracellularis (strain PHE/MN1-00).